The sequence spans 122 residues: Ribosomal protein eL22-like (122 aa).

A phosphoserine mark is found at Ser112, Ser118, and Ser120.

It belongs to the eukaryotic ribosomal protein eL22 family.

The polypeptide is Ribosomal protein eL22-like (RPL22L1) (Homo sapiens (Human)).